Reading from the N-terminus, the 359-residue chain is Insulin gene enhancer protein ISL-2 (359 aa).

2 consecutive LIM zinc-binding domains span residues Ala25 to Gly86 and Ile87 to Arg149. A disordered region spans residues Ala151–Lys190. A phosphoserine mark is found at Ser154 and Ser157. The homeobox DNA-binding region spans Thr191–Ser250. The LIM-binding domain (LID) stretch occupies residues Gly272–Trp301. Ser279 is subject to Phosphoserine. Over residues Glu326 to Ser336 the composition is skewed to low complexity. Residues Glu326–Thr359 are disordered. Over residues Asp337 to Thr359 the composition is skewed to polar residues.

Interacts with LHX4.

The protein localises to the nucleus. In terms of biological role, transcriptional factor that defines subclasses of motoneurons that segregate into columns in the spinal cord and select distinct axon pathways. This is Insulin gene enhancer protein ISL-2 (Isl2) from Mus musculus (Mouse).